A 483-amino-acid polypeptide reads, in one-letter code: Glutamyl-tRNA(Gln) amidotransferase subunit A (483 aa).

Residues K75 and S150 each act as charge relay system in the active site. S174 serves as the catalytic Acyl-ester intermediate.

This sequence belongs to the amidase family. GatA subfamily. In terms of assembly, heterotrimer of A, B and C subunits.

The catalysed reaction is L-glutamyl-tRNA(Gln) + L-glutamine + ATP + H2O = L-glutaminyl-tRNA(Gln) + L-glutamate + ADP + phosphate + H(+). Functionally, allows the formation of correctly charged Gln-tRNA(Gln) through the transamidation of misacylated Glu-tRNA(Gln) in organisms which lack glutaminyl-tRNA synthetase. The reaction takes place in the presence of glutamine and ATP through an activated gamma-phospho-Glu-tRNA(Gln). The sequence is that of Glutamyl-tRNA(Gln) amidotransferase subunit A from Gloeothece citriformis (strain PCC 7424) (Cyanothece sp. (strain PCC 7424)).